The following is a 600-amino-acid chain: Proton channel OTOP1 (600 aa).

The segment at M1–S50 is disordered. Residues M1–A56 lie on the Cytoplasmic side of the membrane. Residues A7–A27 show a composition bias toward low complexity. A helical transmembrane segment spans residues E57–W78. The Extracellular portion of the chain corresponds to A79–G86. Residues K87 to G110 form a helical membrane-spanning segment. The Cytoplasmic portion of the chain corresponds to R111–A128. Residues R129–A151 traverse the membrane as a helical segment. Topologically, residues Y152–S161 are extracellular. Residues A162–A186 traverse the membrane as a helical segment. At K187–K194 the chain is on the cytoplasmic side. A helical transmembrane segment spans residues T195 to K221. Over H222–S262 the chain is Extracellular. The chain crosses the membrane as a helical span at residues H263–K288. The Cytoplasmic portion of the chain corresponds to N289–V309. The chain crosses the membrane as a helical span at residues L310–I332. The Extracellular portion of the chain corresponds to H333 to E342. Residues S343–W368 traverse the membrane as a helical segment. The Cytoplasmic portion of the chain corresponds to I369–K386. Residues L387–A411 form a helical membrane-spanning segment. Topologically, residues C412–W421 are extracellular. The helical transmembrane segment at Y422–I442 threads the bilayer. The Cytoplasmic segment spans residues E443–R532. A helical transmembrane segment spans residues N533–F551. At G552 to E569 the chain is on the extracellular side. A helical membrane pass occupies residues P570–L593. Topologically, residues F594 to I600 are cytoplasmic.

This sequence belongs to the otopetrin family. Homodimer. Interacts with STAT1, independently of STAT1 phosphorylation status.

Its subcellular location is the cell membrane. The protein resides in the cell projection. It localises to the microvillus. The enzyme catalyses H(+)(in) = H(+)(out). Activated by both acid and alkali, with proton influx in response to extracellular acid and proton efflux during alkali stimulation. Inhibited by Zn(2+); this inhibition is thought to be pH-sensitive. Currents evoked in response to mild acid (pH 6.0) stimulus may also be mildly potentiated by exposure to Zn(2+). Activated by NH(4)Cl. Functionally, proton-selective ion channel. Biphasically modulated by acid and alkali, mediating proton influx and efflux in response to extracellular acid and base stimulation, respectively. Sour taste receptor, which carries inward currents in response to extracellular acidification. Sensor for ammonium chloride (NH(4)Cl) in taste receptor cells. NH(4)Cl acts by increasing the intracellular pH, thereby generating a driving force for proton entry through OTOP1 channel. Might also participate in alkaline sensation. Plays a role in the regulation of Ca(2+) flux in response to purigenic (ATP, ADP and UDP) stimuli, leading to increase in cytosolic Ca(2+) due to influx of extracellular calcium. May play this role by inhibiting P2Y purinoceptor-mediated Ca(2+) release in a Ca(2+)-dependent manner and promote an influx of Ca(2+) in response to ATP. Through this mechanism and possibly others, plays a role in the formation and function of calcium carbonate-based structures in the vestibular system of the inner ear, called otoconia, that sense gravity and linear acceleration. In obesity, may attenuate adipose tissue inflammation, through the negative regulation of IFNG signaling, hence may play an adaptive role in the maintainance of metabolic homeostasis. Following alkali activation, may also be permeable Na(+), K(+), Cs(+) and Li(+). This chain is Proton channel OTOP1, found in Rattus norvegicus (Rat).